The chain runs to 156 residues: MPRRRVVGQRKILPDPKFHSELLAKFINVIMQDGKKSTAEKIIYKALDVIAEKKGANHLDVLEAALDNVRPSVEVKSRRVGGSTYQVPCEVRPVRRNALAMRWLVEAARKRGEKSMALRLAGEMLDASENKGTAVKKREDVHRMAEANKAFAHYRW.

This sequence belongs to the universal ribosomal protein uS7 family. Part of the 30S ribosomal subunit. Contacts proteins S9 and S11.

One of the primary rRNA binding proteins, it binds directly to 16S rRNA where it nucleates assembly of the head domain of the 30S subunit. Is located at the subunit interface close to the decoding center, probably blocks exit of the E-site tRNA. This chain is Small ribosomal subunit protein uS7, found in Shewanella sp. (strain ANA-3).